The following is a 210-amino-acid chain: MTNLNYQQTHFVMSAPDIRHLPSDCGIEVAFAGRSNAGKSSALNTLTNQKSLARTSKTPGRTQLINLFEVVDGKRLVDLPGYGYAEVPEEMKRKWQRALGEYLEKRRSLQGLVVLMDIRHPLKDLDQQMIQWAVESNIQVLVLLTKADKLASGARKAQLNMVREAVLAFNGDVQVEAFSSLKKQGVDKLRQKLDSWFSELAPVEEIQDGE.

The 175-residue stretch at 25 to 199 (CGIEVAFAGR…RQKLDSWFSE (175 aa)) folds into the EngB-type G domain. GTP is bound by residues 33–40 (GRSNAGKS), 60–64 (GRTQL), 78–81 (DLPG), 145–148 (TKAD), and 178–180 (FSS). Mg(2+) is bound by residues S40 and T62.

It belongs to the TRAFAC class TrmE-Era-EngA-EngB-Septin-like GTPase superfamily. EngB GTPase family. The cofactor is Mg(2+).

Its function is as follows. Necessary for normal cell division and for the maintenance of normal septation. The chain is Probable GTP-binding protein EngB from Salmonella paratyphi C (strain RKS4594).